The primary structure comprises 834 residues: WW domain-containing adapter protein with coiled-coil homolog (834 aa).

Disordered regions lie at residues 1-247 (MVMH…WSEH), 268-411 (KPKE…SVAT), and 430-504 (VTGA…GAKG). Residues 22–31 (HTSYQSSKYS) are compositionally biased toward low complexity. Over residues 33–50 (SKRDYERDRSSNYRDRDL) the composition is skewed to basic and acidic residues. Residues 53 to 77 (GAGGGGGGGSAGGGGGGSGNGGGPL) are compositionally biased toward gly residues. The segment covering 96 to 108 (RSHDLRDRSDHRG) has biased composition (basic and acidic residues). Residues 109 to 119 (GGGGNGRGGSG) are compositionally biased toward gly residues. Composition is skewed to basic and acidic residues over residues 127-168 (KMRD…DRRG), 181-246 (SSRE…DWSE), and 268-303 (KPKE…DRFS). Positions 244–271 (WSEHVSSSGKMYYYNCKTEISQWEKPKE) constitute a WW domain. Composition is skewed to polar residues over residues 304–314 (RSTYKHSNSSR) and 350–363 (GDST…YSLS). Residues 369–384 (HGGGPGGGGPGGGGGS) are compositionally biased toward gly residues. 2 stretches are compositionally biased toward low complexity: residues 402–411 (TANSSASVAT) and 431–466 (TGAT…LRNS). Polar residues predominate over residues 472 to 496 (GSTSGTTVPTLGSQDPHQHHLNSNA).

In terms of tissue distribution, expressed in adult head and thorax and in larval central nervous system and fat body.

The protein localises to the nucleus. The protein resides in the lysosome. Acts as a linker between gene transcription and histone H2B monoubiquitination at 'Lys-118'. Regulates the cell-cycle checkpoint activation in response to DNA damage. Positive regulator of amino acid starvation-induced autophagy. Also acts as a negative regulator of basal autophagy. Positively regulates mTor activity. Promotes, in an energy-dependent manner, the assembly of the TTT complex and the RUVBL complex composed of pont and rept into the TTT-RUVBL complex. This leads to dimerization of the mTORC1 complex and its subsequent activation. May negatively regulate the ubiquitin proteasome pathway. Required for habituation, a form of non-associative learning. The sequence is that of WW domain-containing adapter protein with coiled-coil homolog from Drosophila melanogaster (Fruit fly).